Consider the following 836-residue polypeptide: Translation initiation factor IF-2 (836 aa).

The segment at 1 to 233 is disordered; sequence MSDTDGKKPL…RSLAAMKRKQ (233 aa). The span at 18-27 shows a compositional bias: polar residues; that stretch reads SGQVKQSFSH. The span at 50-60 shows a compositional bias: low complexity; sequence SGSSTTTSSPS. Over residues 88 to 156 the composition is skewed to basic and acidic residues; the sequence is KLREVEDAKR…AARRAEEAKR (69 aa). Residues 167–176 show a composition bias toward low complexity; that stretch reads PAESRASAPP. Residues 185–206 show a composition bias toward basic and acidic residues; that stretch reads SRKEREREADRDRTTKKDDSRR. One can recognise a tr-type G domain in the interval 333 to 501; sequence PRPPIITIMG…NIALQAEILD (169 aa). Residues 342–349 form a G1 region; that stretch reads GHVDHGKT. Position 342–349 (342–349) interacts with GTP; the sequence is GHVDHGKT. Positions 367–371 are G2; sequence GITQH. Positions 389 to 392 are G3; it reads DTPG. GTP is bound by residues 389 to 393 and 443 to 446; these read DTPGH and NKID. The G4 stretch occupies residues 443–446; that stretch reads NKID. Residues 479 to 481 are G5; that stretch reads SAK.

This sequence belongs to the TRAFAC class translation factor GTPase superfamily. Classic translation factor GTPase family. IF-2 subfamily.

The protein localises to the cytoplasm. Its function is as follows. One of the essential components for the initiation of protein synthesis. Protects formylmethionyl-tRNA from spontaneous hydrolysis and promotes its binding to the 30S ribosomal subunits. Also involved in the hydrolysis of GTP during the formation of the 70S ribosomal complex. The sequence is that of Translation initiation factor IF-2 from Cereibacter sphaeroides (strain ATCC 17023 / DSM 158 / JCM 6121 / CCUG 31486 / LMG 2827 / NBRC 12203 / NCIMB 8253 / ATH 2.4.1.) (Rhodobacter sphaeroides).